The primary structure comprises 265 residues: 14-3-3-like protein GF14 nu (265 aa).

S67, S109, and S190 each carry phosphoserine. A Phosphothreonine modification is found at T211. The interval 242–265 is disordered; that stretch reads AGGDEIKEASKHEPEEGKPAETGQ. Residues 245–265 show a composition bias toward basic and acidic residues; sequence DEIKEASKHEPEEGKPAETGQ.

The protein belongs to the 14-3-3 family. As to quaternary structure, component of the SERK1 signaling complex, composed of KAPP, CDC48A, GRF6 or GRF7, SERK1, SERK2, SERK3/BAK1 and BRI1. Interacts with DREB1A and DREB1B in the nucleus. Interacts with CINV1.

Its subcellular location is the nucleus. It localises to the cytoplasm. In terms of biological role, is associated with a DNA binding complex that binds to the G box, a well-characterized cis-acting DNA regulatory element found in plant genes. The protein is 14-3-3-like protein GF14 nu (GRF7) of Arabidopsis thaliana (Mouse-ear cress).